Reading from the N-terminus, the 622-residue chain is MALLQISEPGMAPAPHQRRLAVGIDLGTTNSLVAAVRNSVPEVLPDEAGRVLLPSVVRYLEKGGRRIGHEAKEQAATDPRNTIVSVKRFMGRGKAEVEGAANAPYEFVDAPGMVQIRTIDGVKSPVEVSAEILATLRYRAEDTLGDELVGAVITVPAYFDDAQRQATKDAARLAGLNVLRLLNEPTAAAIAYGLDNAAEGLYAVYDLGGGTFDLSILKLTKGVFEVLAAGGDSALGGDDFDHALFDHVLAQAGIDAKTLAPEDVRLLLDRVRVLKEALSSAPEAALDVTLSSGAHLAPTISHDTFASLVEPLVQRTLTPTRKALRDAQVTPADIKGVVLVGGATRMPVIRDAVAKYFGQPPLVNLDPDQVVALGAAIQADLLAGNRGTGDDWLLLDVIPLSLGVETMGGLVEKIIPRNSTIPIARAQEFTTFKDGQTAMAIHVVQGERELVADCRSLARFELRGIPPMTAGAARIRVTYQVDADGLLSVFAREQQSGVEASVVVKPSYGLADDDIAKMLEDSFKTAEIDMRARALREAQVEAQRMLEATQAALAADGELLDADERAQVDALADALRAVAQGDDTNAIEAATKALADGTDEFAARRMDKSIKRALSGRRLDEI.

It belongs to the heat shock protein 70 family.

In terms of biological role, chaperone involved in the maturation of iron-sulfur cluster-containing proteins. Has a low intrinsic ATPase activity which is markedly stimulated by HscB. This is Chaperone protein HscA homolog from Burkholderia cenocepacia (strain ATCC BAA-245 / DSM 16553 / LMG 16656 / NCTC 13227 / J2315 / CF5610) (Burkholderia cepacia (strain J2315)).